Consider the following 241-residue polypeptide: Ribonuclease HII (241 aa).

An RNase H type-2 domain is found at 27–227; the sequence is GPVAGVDEAG…REARSLRLED (201 aa). Residues aspartate 33, glutamate 34, and aspartate 128 each coordinate a divalent metal cation.

The protein belongs to the RNase HII family. Mn(2+) is required as a cofactor. The cofactor is Mg(2+).

It is found in the cytoplasm. It catalyses the reaction Endonucleolytic cleavage to 5'-phosphomonoester.. Its function is as follows. Endonuclease that specifically degrades the RNA of RNA-DNA hybrids. The chain is Ribonuclease HII from Frankia alni (strain DSM 45986 / CECT 9034 / ACN14a).